The sequence spans 39 residues: Natriuretic peptide TcNPa (39 aa).

Positions 1–8 (SGSETAKI) are excised as a propeptide. Residues Cys12 and Cys28 are joined by a disulfide bond. O-linked (GalNAc...) threonine glycosylation occurs at Thr35.

The protein belongs to the natriuretic peptide family. Post-translationally, O-linked glycans consist of galactosyl-beta(1-3)-N-acetylgalactosamine (Gal-GalNAc). In terms of processing, the synthetic non-glycosylated form shows higher potency on natriuretic receptors (EC(50)=672.90 nM) and NPR2 (EC(50)=261.0 nM). Expressed by the venom gland.

It is found in the secreted. Its function is as follows. Snake venom natriuretic peptide that targets both NPR1 (EC(50)=1080.0 nM) and NPR2 (EC(50)=328.60 nM). Exhibits hypotensive and vasodepressor activities. The chain is Natriuretic peptide TcNPa from Tropidechis carinatus (Australian rough-scaled snake).